We begin with the raw amino-acid sequence, 558 residues long: Protein SET DOMAIN GROUP 41 (558 aa).

The SET domain occupies 115 to 249; it reads PSISVAIHHA…SGEEITVSYI (135 aa).

The protein belongs to the class V-like SAM-binding methyltransferase superfamily.

This Arabidopsis thaliana (Mouse-ear cress) protein is Protein SET DOMAIN GROUP 41 (SDG41).